Consider the following 404-residue polypeptide: CCA-adding enzyme (404 aa).

2 residues coordinate ATP: G32 and R35. G32 and R35 together coordinate CTP. Mg(2+) is bound by residues D45 and D47. ATP is bound by residues R116, D159, R162, R165, and R168. 5 residues coordinate CTP: R116, D159, R162, R165, and R168.

This sequence belongs to the tRNA nucleotidyltransferase/poly(A) polymerase family. Bacterial CCA-adding enzyme type 3 subfamily. As to quaternary structure, homodimer. The cofactor is Mg(2+).

It catalyses the reaction a tRNA precursor + 2 CTP + ATP = a tRNA with a 3' CCA end + 3 diphosphate. The enzyme catalyses a tRNA with a 3' CCA end + 2 CTP + ATP = a tRNA with a 3' CCACCA end + 3 diphosphate. Catalyzes the addition and repair of the essential 3'-terminal CCA sequence in tRNAs without using a nucleic acid template. Adds these three nucleotides in the order of C, C, and A to the tRNA nucleotide-73, using CTP and ATP as substrates and producing inorganic pyrophosphate. tRNA 3'-terminal CCA addition is required both for tRNA processing and repair. Also involved in tRNA surveillance by mediating tandem CCA addition to generate a CCACCA at the 3' terminus of unstable tRNAs. While stable tRNAs receive only 3'-terminal CCA, unstable tRNAs are marked with CCACCA and rapidly degraded. This Ligilactobacillus salivarius (strain UCC118) (Lactobacillus salivarius) protein is CCA-adding enzyme.